Consider the following 346-residue polypeptide: Isopentenyl-diphosphate delta-isomerase (346 aa).

Arginine 12–lysine 13 lines the substrate pocket. Residues alanine 67–threonine 69, serine 97, and asparagine 126 each bind FMN. Serine 97–arginine 99 provides a ligand contact to substrate. Position 156 (glutamine 156) interacts with substrate. Glutamate 157 serves as a coordination point for Mg(2+). FMN-binding positions include lysine 188, threonine 218, glycine 263–arginine 265, and alanine 284–glycine 285.

This sequence belongs to the IPP isomerase type 2 family. As to quaternary structure, homooctamer. Dimer of tetramers. The cofactor is FMN. It depends on NADPH as a cofactor. Mg(2+) serves as cofactor.

It localises to the cytoplasm. The enzyme catalyses isopentenyl diphosphate = dimethylallyl diphosphate. Functionally, involved in the biosynthesis of isoprenoids. Catalyzes the 1,3-allylic rearrangement of the homoallylic substrate isopentenyl (IPP) to its allylic isomer, dimethylallyl diphosphate (DMAPP). The chain is Isopentenyl-diphosphate delta-isomerase from Moorella thermoacetica (strain ATCC 39073 / JCM 9320).